Here is a 1115-residue protein sequence, read N- to C-terminus: Receptor-type tyrosine-protein phosphatase H (1115 aa).

The N-terminal stretch at 1-27 is a signal peptide; the sequence is MAGAGGGLGVWGNLVLLGLCSWTGARA. Over 28 to 754 the chain is Extracellular; it reads PAPNPGRNLT…VVCHTESAGV (727 aa). Fibronectin type-III domains are found at residues 32-121, 122-209, 210-299, 300-387, 388-477, 478-563, 564-666, and 665-749; these read PGRN…APNP, VRNL…TAHN, PVRN…APNP, VRNL…TAPN, PVRN…VPNA, VTSL…TAAT, APNE…TYPD, and PDTV…VCHT. 10 N-linked (GlcNAc...) asparagine glycosylation sites follow: N35, N83, N172, N256, N285, N350, N434, N468, N556, and N642. Residues 755 to 775 traverse the membrane as a helical segment; sequence IAGAFVGILLFLILVGLLIFF. The Cytoplasmic segment spans residues 776-1115; that stretch reads LKRRNKKKQQ…AAIQAHKLEV (340 aa). In terms of domain architecture, Tyrosine-protein phosphatase spans 820 to 1079; it reads FADEYQQLSL…VFLHQCILRF (260 aa). Residue C1020 is the Phosphocysteine intermediate of the active site. Y1094 and Y1102 each carry phosphotyrosine.

It belongs to the protein-tyrosine phosphatase family. Receptor class 3 subfamily. Homodimer; disulfide-linked. Interacts with LCK. Interacts (phosphorylated form) with GRB2 (via SH2 domain). Interacts (phosphorylated form) with FYN (via SH2 domain). Interacts (via extracellular domain) with CEACAM20 (via extracellular domain); the interaction dephosphorylates CEACAM20. Expressed at high levels in the brain, spleen and liver and at lower levels in the heart and stomach. Expressed in pancreatic and colorectal cancer cells, but not in normal pancreas or colon. Expression in hepatocellular carcinoma is related to the differentiation status of the tumor and expression is inversely related to tumor aggressiveness.

The protein resides in the cell projection. It localises to the microvillus membrane. It is found in the apical cell membrane. The protein localises to the cytoplasm. The enzyme catalyses O-phospho-L-tyrosyl-[protein] + H2O = L-tyrosyl-[protein] + phosphate. Its activity is regulated as follows. Regulated by reversible dimerization. Dimerization reduces its catalytic activity. Functionally, protein phosphatase that may contribute to contact inhibition of cell growth and motility by mediating the dephosphorylation of focal adhesion-associated substrates and thus negatively regulating integrin-promoted signaling processes. Induces apoptotic cell death by at least two distinct mechanisms: inhibition of cell survival signaling mediated by PI 3-kinase, Akt, and ILK and activation of a caspase-dependent proapoptotic pathway. Inhibits the basal activity of LCK and its activation in response to TCR stimulation and TCR-induced activation of MAP kinase and surface expression of CD69. Inhibits TCR-induced tyrosine phosphorylation of LAT and ZAP70. Inhibits both basal activity of DOK1 and its CD2-induced tyrosine phosphorylation. Induces dephosphorylation of BCAR1, focal adhesion kinase and SRC. Reduces migratory activity of activity of Jurkat cells. Reduces tyrosine phosphorylation of CEACAM20 and thereby contributes to suppress the intestinal immune response CEACAM20. The chain is Receptor-type tyrosine-protein phosphatase H (PTPRH) from Homo sapiens (Human).